A 318-amino-acid chain; its full sequence is NADH-ubiquinone oxidoreductase chain 1 (318 aa).

8 helical membrane-spanning segments follow: residues 2–22 (PMINLLLLIMSILIAMAFLML), 76–96 (ALALTIALLLWTPLPMPIPLI), 100–120 (LGLLFILAASSLTVYSILWSG), 146–166 (LALILLSVLLMSGSFNLSALI), 171–191 (HSWLLLPSWPLALMWFISTLA), 222–242 (LFFMAEYTNIILMNALTTMIF), 253–273 (ELYTTLFTIKTLLLTSLFLWI), and 294–314 (LPLTLALLMWHISVPIATSGI).

This sequence belongs to the complex I subunit 1 family. As to quaternary structure, core subunit of respiratory chain NADH dehydrogenase (Complex I) which is composed of 45 different subunits.

The protein resides in the mitochondrion inner membrane. It carries out the reaction a ubiquinone + NADH + 5 H(+)(in) = a ubiquinol + NAD(+) + 4 H(+)(out). In terms of biological role, core subunit of the mitochondrial membrane respiratory chain NADH dehydrogenase (Complex I) which catalyzes electron transfer from NADH through the respiratory chain, using ubiquinone as an electron acceptor. Essential for the catalytic activity and assembly of complex I. In Pongo abelii (Sumatran orangutan), this protein is NADH-ubiquinone oxidoreductase chain 1 (MT-ND1).